Here is a 126-residue protein sequence, read N- to C-terminus: DNA-directed RNA polymerase subunit omega (126 aa).

This sequence belongs to the RNA polymerase subunit omega family. As to quaternary structure, the RNAP catalytic core consists of 2 alpha, 1 beta, 1 beta' and 1 omega subunit. When a sigma factor is associated with the core the holoenzyme is formed, which can initiate transcription.

The catalysed reaction is RNA(n) + a ribonucleoside 5'-triphosphate = RNA(n+1) + diphosphate. Promotes RNA polymerase assembly. Latches the N- and C-terminal regions of the beta' subunit thereby facilitating its interaction with the beta and alpha subunits. The polypeptide is DNA-directed RNA polymerase subunit omega (Paramagnetospirillum magneticum (strain ATCC 700264 / AMB-1) (Magnetospirillum magneticum)).